The following is a 3999-amino-acid chain: MSGQDPVKESGQREPIAVVGSGFRFPGSSNNPSKLWDLLVKPRDLLTKIPENRFNSDAFYHPKPFHHGTSDVRESYFLEEDHRQFDAAFFNIKPVEVHAIDPQQRILMEAVYESLEAAGLSMESLAGSRTGVYVGLMCADYVDLLNNDVNSLPTYTPTGTARSIMSNRISYFFDWHGPSMTIDTACSSSLVAVHQAVQLLRSGDSDVAVAAGANLMLGPLPYIAESKLQMLSSNSRSRMWDIDASGYARGEGVAAVVLKRLSSAIADGDQIECIIRESGINQDGRTKGITMPSSVAQADLISRTYAKAGLNPRDPTERCQYFEAHGTGTAAGDPKEAEAISKAFFHPGEDISGKTDPLYVGSIKTVIGHTEGTAGLAGLLKASLAVQHGIVPPNLLFNQLSPAVEPFYTNLEVLTSPRPWPKLAEGTPRRASINSFGFGGTNAHCIIENYIPSPAHTDRAITTRQFTPFNFSAASEKSLRGILTDYSNYLRLNPEVSLQDLSYTLYARRSEHAVRVHISAGSTTDLYTRIDDLLQVPSSGGNAQSIGTRSKILSRPVRALGVFTGQGAQWPSMGRELVLNSPYAKEVVQKLDLVLQSLPEPERPDWSLMYELTCDASQSRLNTAVIAQPLCTVVQIILFDLLSSAGVKLQAVVGHSSGEIAAAYAAGYLTREDALKIAYYRGYFTNLTPSDRPGAMMAIGTSAEDAEELCSLPMFQGRLAVAAVNSSSSVTISGDRDAIEQAKEVLEDEKKFARLLKVDKAYHSSHMVPCAEGYLEALKNSEIHPLSGTDDCVWHSSTHKNKYSHGDGALAGQYWADNMIQPVLFSHAVEAAASAGDAFDIAIEVGPHPALKGPALQTLQEVQKDTIPYTGLLNRGKDDIEALSDALGYLWTQFTPSLIDFRGFDLLASGGEQRSLIRNLPTYHWDHDKIFWHKSRAVKAFLGQKNIPNPLLGSRTTDVMEQEIRWRNLLRLSELPWVRGHQLQGQVIYPATAYISTAVEAARFLVPKGDNIALIEVEDFSLGKPLVFAEDAAGIETVFTLSDIAKENDTTYSASFIYHASTNAETEQLSTHAIGRVIVITGETSSHWLPSRQKDLPNLVDIPEDRFYASLEPLGYAYSGYFKTMSSIKRRLNFSSTKIRVPPQDDEPEKMLLHPALLDTALQGIFLAYCWPGDGSLEQLHVPTGIKNFRVNVGLCQQVLTPETDVSSCTQLTGNPLATKHLNGDVEIYADDGAGLVQMEGLRVVAFAEQTEDADRAIFSEHVWDVLAPNCERAMGGKRATLQDYEFAYGMERVVVYYMKQLVTLFPESLRKIMNLEWHFECMFAFFTDVLTTLEAGERRTARREWLQDTAADVEGIKARYAHTVDMQLTCAVGDNLPAVLRGESTILQHLTKDNLLNRFYEVGLGLKEVSGYLGKIVEQVVHRHPRMKILEIGKSGTGGATKVIMRGIGRSFSSYTYTDISPNFFESAQEVFSAVADKMIFKTLDVEKDITEQSFEEHSYDLVVASLVLHATTNLKRTLTNARRLLKPGGYLIFQEICDNDIARVGFLICAVPGWWLGQDDGRKLSPCVSTSEWHNLLLETGFSGADSPMPEYDAAPYPLAVIVSQAVDDRIALLREPLSLVQNDASVGEPWDLVLVGGQTSKTAMIIEQISGLITSSGVTHSVFKTIDEVDGTRISPTTAILCLADLDEPVFKGLSSTTLEGLQRLFETQRTVLWITQGCRSEDPWMNMSVGLGRTLVLENPDLALQFLDLEPGVEPNPRQLLEVLLRLRQSDIWEKEGKFDDVLWTNEHELAYDKGDLTLSRVHLSGALNDRYNAAKRTVLEAKNPQETPLNLSLGPSLKQFLVLDDVLVAKTLSSWELKDDSETLIKVTHSLLMPALAAPTPLYLILGTINKTKKSVLSIADNNGSYALVASNKVLAIDVPAGQESQLLSLFNTRLQVDSMLSLCESDSTLLIHEPSPDLASAIAACGSSGKINVVFTTSTSSGDSTWTRIDAYSTQRAIRSLLPENVSVFIDCSAGSQSRRTASLIASCLLPSCFQTTISGVQSLQRIRGLSPTDLCQKLNDALAWASKELAAPSNPGTLPSIKLETLIDDSAVASTTQAVVDWSTATSVPVQVSTVDNHVTFKGNNTYVLFGLTSDLAQSICDWMVSRGARNIVLTSRNPKIDSNWIELLKGAGVRLEAFANDITNKDALSSLVHHIRKNFPPIAGVAHGAMVLDDVSFFEMPYEKMTKVLGPKVQGAILLDEIFQDTSLDFFVFFSSVTAIAGNRGQSAYTSANMFMTSLASQRRDKGLAASILHLGAVMGVGYINRGFSDAFFTTLRRAGFMMMSERGLHLLFGEAVLASNPHSGRNPEVITALELSRLGDKPPLWTKFPRFQHCLQADDGANKRAKKKTAAVSTKLKLAEATTAEEILEIVQDAFYLKLQVALQIPDETDKSQVLASGTDDLGIDSLVAVEIRSWFLKELETEIPVFKVLSGGSVTQLVEYAIGSMPAELTPNRADSAKASEPEPEAPATLMPPPDSVSSSPSSLPKTSASGSSQQMSEGSSKTSEQGDAQDKKEESPSESVNDISELTYEKVLPVSPGQSRFWFLKHLLEDQTTANNTIWVSIQGTIRLNDLEMAIRKVAARHEALRTSFFMDENQKPIQAISETSRLYLEKKTLSSGSQAEREFEGLKKHVYDIEHGECMRLVYLEVTDTESYLLIGSHHIIMDGISLEVFLKDIEKAYNGQSLSNQVYQYSDYSEKLRQELEQGTMQEEINYWKSEFADVPSPLPLLPFAAEKQRKSLAAYSHTSVSRLVDPRVARQISNTCHKLKANVFHFYLGVFEVLLFKLFGNNDVCIGMADANRWNEKVSQSIGMYLNLLPLRFHLDGRQSFEAMLKDTRRKAYLAMSNSRLPFDVLLDNVICERSSAFSPLFQAFINYRQGVNEKRVLGNATGATKELSLPRAGYDISLDIIENPGNDTRVTVMLQKALYSDNESSRVLDLYFKLLNDLSSSSKKMLEEVSLFTEQEISNSIQLGQGPVLPSQWPETLVHRIDAMIAVHTDKVALKEITGKSWTYLQLEEEINRVSSVLIQANVTSGSTVAIYQEASPNFVFSLLAVLRIGAIYVPLDCNLPEGRLRLVLAECKPSALLADGKTLSQIGSLGLSPSVTILDVSRLPAASASISPVFTKAANPAAILFTSGSTGVPKGVVLSHGSLRNHVEALVHTHGFGSETVLQQSSVGFDMSMNQVFMALANGGSLVIVPESLRKDSSAIAKILLEQNITYTSATPSEYFAWLRHGSDDLLRNKSWKYATAGGEKFTPKLLQAFQKLKSAFSHSFHAFNAYGPTECSMSSNELEVNLDGHSAQFITAGRALPNYAVYIVDENATPQTIEIPGEICIAGAGVALEYLNNPVETAKKFLKDPFASVSAIERGWNRMYRTGDKGVLRPDGTLEILGRIEGDTQIKLRGLRIEMQDIEQSILKAGEGRVKEAIVTPRGDPTILVAHAVVSPIVSIDNEREYLRGLAASLPLPQYMRPAAIIPIATMPLNASGKIDRRALQNLDIPSTLQQKTRSKRKLTDTESKLAQIWVEVLPQQLQEVYAIDETSDFFQVGGNSMLLIELRELVKKRFQVHLPLLRFFEHSTLGAMAAAIQDTSPGEKLEINWDVETEVPSAYSELNTQEPAQSHSSHKTIVLTGATGFLGKYLLNLLTEAPDVDKIHCIAIRNREKLANFTNSAKVVIHDGDLASPRCGLSEADATSVFGSANVIIHNGADVSFLKTYSSLRASNVLSTKELVKLALPHHIPIHYISTATVGKLNKSDSLAPESLAQYPPGPSFVDGYAASKWASEVFLEKTTRQFGLPTFIHRPSSITGDGAGENDIVPSVLKYSAMIKALPDSSKWTGYIDLITVEKAAAGIADSVLQGRLVNVTATEAEYLHHAGEKVIPAQSIKTILTADDGPQWESVSMKNWVEKAIQNGMNPLVGEFLLSIDKGQGMQIGQKLLSKTDGSKNEF.

A Ketosynthase family 3 (KS3) domain is found at 13-449; sequence REPIAVVGSG…GTNAHCIIEN (437 aa). Catalysis depends on for beta-ketoacyl synthase activity residues cysteine 186, histidine 325, and histidine 369. Residues 562–879 enclose the Malonyl-CoA:ACP transacylase (MAT) domain; the sequence is VFTGQGAQWP…TGLLNRGKDD (318 aa). The tract at residues 949–1084 is N-terminal hotdog fold; the sequence is NPLLGSRTTD…GRVIVITGET (136 aa). The PKS/mFAS DH domain occupies 949–1253; the sequence is NPLLGSRTTD…VVAFAEQTED (305 aa). Residues 950 to 1252 form a dehydratase (DH) domain region; that stretch reads PLLGSRTTDV…RVVAFAEQTE (303 aa). Residue histidine 981 is the Proton acceptor; for dehydratase activity of the active site. The C-terminal hotdog fold stretch occupies residues 1099-1253; it reads LVDIPEDRFY…VVAFAEQTED (155 aa). Aspartate 1159 serves as the catalytic Proton donor; for dehydratase activity. The segment at 1298-1593 is methyltransferase (cMeT) domain; the sequence is YMKQLVTLFP…FSGADSPMPE (296 aa). Residues 2133-2306 form the Ketoreductase (KR) domain; it reads TYVLFGLTSD…AASILHLGAV (174 aa). The region spanning 2414–2495 is the Carrier 1 domain; the sequence is EEILEIVQDA…QLVEYAIGSM (82 aa). Serine 2455 carries the post-translational modification O-(pantetheine 4'-phosphoryl)serine. The disordered stretch occupies residues 2501 to 2573; it reads PNRADSAKAS…EESPSESVND (73 aa). A compositionally biased stretch (low complexity) spans 2526–2554; it reads SVSSSPSSLPKTSASGSSQQMSEGSSKTS. The interval 2580–3015 is condensation; that stretch reads EKVLPVSPGQ…EEVSLFTEQE (436 aa). Residues 3045–3453 form an adenylation region; it reads AVHTDKVALK…RIEGDTQIKL (409 aa). One can recognise a Carrier 2 domain in the interval 3562–3642; that stretch reads RKLTDTESKL…AMAAAIQDTS (81 aa). O-(pantetheine 4'-phosphoryl)serine is present on serine 3602. The interval 3681-3900 is reductase-like (R) domain (R); sequence LTGATGFLGK…IDLITVEKAA (220 aa).

This sequence in the C-terminal section; belongs to the NRP synthetase family.

Its pathway is mycotoxin biosynthesis. Hybrid PKS-NRPS synthetase; part of the gene cluster that mediates the biosynthesis of xenoacremones such as xenoacremone A, a compound that shows inhibitory activity toward the PI3K/AKT signaling pathway and which has the ability to induce apoptosis of A549 lung cancer cells. Within the pathway, cooperation of the hybrid PKS-NRPS xenE and the trans-acting enoyl reductase xenG is responsible for the formation of the reduced tyrosine-nonaketide derivative. The PKS module of xenE acted in combination with the trans-acting enoyl reductase xenG to produce a double-methylated nonaketide attached to the ACP domain. In parallel, the adenylation (A) domain of the NRPS module activated L-tyrosine, which was then transferred to the ACP domain. The condensation (C) domain subsequently linked this group to the polyketide chain, forming an enzyme-bound amide. Reductive release by the C-terminal R domain afforded the aldehyde derivative. The alpha/beta hydrolase xenA then accelerates intramolecular nucleophilic attack to give a pyrrolidone derivative. Subsequently, three enzymes, xenF, xenD, and xenC, coordinately participate in the conversion to xenoacremone B. XenF catalyzes sigmatropic rearrangement to form an A-ring, which leads to an unusual intermediate with a hexane ring, which is required for the formation of the tricarbocyclic product. Epoxidation catalyzed by xenD and the formation of the paracyclophane ether catalyzed by xenC initiate a spontaneous intramolecular Diels-Alder (IMDA) reaction to yield xenoacremone B. Spontaneous hydration of xenoacremone B leads to the formation of xenoacremone A, which undergoes subsequent methylation to afford xenoacremone C. This chain is Hybrid PKS-NRPS synthetase xenE, found in Xenoacremonium sinensis (Endophyte fungus).